The following is a 256-amino-acid chain: GDSL esterase/lipase At1g18120 (256 aa).

Positions 1 to 49 (MYRVYKNNKFILISIPRITNKLWQKNCNLVILLGVLLVLTLFHDPIIVA) are cleaved as a signal peptide. Serine 67 serves as the catalytic Nucleophile. Asparagine 181 is a glycosylation site (N-linked (GlcNAc...) asparagine).

Belongs to the 'GDSL' lipolytic enzyme family.

It is found in the secreted. This is GDSL esterase/lipase At1g18120 from Arabidopsis thaliana (Mouse-ear cress).